The chain runs to 227 residues: LysM and putative peptidoglycan-binding domain-containing protein 1 (227 aa).

Residues Ser-23 and Ser-33 each carry the phosphoserine modification. One can recognise a LysM domain in the interval 40–84 (LEHQLEPGDTLAGLALKYGVTMEQIKRTNRLYTNDSIFLKKTLYI). The interval 95–157 (NGLDSEEEEN…PSHDLSASDF (63 aa)) is disordered. The segment covering 98 to 108 (DSEEEENDGEE) has biased composition (acidic residues). Ser-99 bears the Phosphoserine mark. Polar residues predominate over residues 143 to 152 (QGTSTPSHDL). A phosphoserine mark is found at Ser-166, Ser-181, Ser-194, and Ser-212. The disordered stretch occupies residues 169-227 (KKAAAQKLRKGESGVPEEDTGLYPSSPRMQQRAVLGPVPLTRTSRTQTLRDQEDEIFKL). The segment covering 216-227 (TLRDQEDEIFKL) has biased composition (basic and acidic residues).

This is LysM and putative peptidoglycan-binding domain-containing protein 1 (Lysmd1) from Rattus norvegicus (Rat).